We begin with the raw amino-acid sequence, 194 residues long: uncharacterized protein (194 aa).

Residues 1–24 form the signal peptide; it reads MRKFVAFFVIVALAALLAGCGGQG.

This is an uncharacterized protein from Archaeoglobus fulgidus (strain ATCC 49558 / DSM 4304 / JCM 9628 / NBRC 100126 / VC-16).